The sequence spans 177 residues: UPF0102 protein BPP4042 (177 aa).

Residues 13 to 43 (AAQAQRRLHRRPPASPRASPGARDGGSPTQR) form a disordered region.

This sequence belongs to the UPF0102 family.

The sequence is that of UPF0102 protein BPP4042 from Bordetella parapertussis (strain 12822 / ATCC BAA-587 / NCTC 13253).